A 206-amino-acid chain; its full sequence is Large ribosomal subunit protein uL4 (206 aa).

The disordered stretch occupies residues 45-78 (QGNRAQKDREQVKHTTKKPWRQKGTGRARAGMSS). Over residues 58-70 (HTTKKPWRQKGTG) the composition is skewed to basic residues.

This sequence belongs to the universal ribosomal protein uL4 family. In terms of assembly, part of the 50S ribosomal subunit.

Functionally, one of the primary rRNA binding proteins, this protein initially binds near the 5'-end of the 23S rRNA. It is important during the early stages of 50S assembly. It makes multiple contacts with different domains of the 23S rRNA in the assembled 50S subunit and ribosome. Its function is as follows. Forms part of the polypeptide exit tunnel. In Burkholderia ambifaria (strain MC40-6), this protein is Large ribosomal subunit protein uL4.